Here is a 231-residue protein sequence, read N- to C-terminus: Adenosine 5'-phosphosulfate reductase (231 aa).

The [4Fe-4S] cluster site is built by cysteine 118, cysteine 119, cysteine 201, and cysteine 204. Cysteine 227 acts as the Nucleophile; cysteine thiosulfonate intermediate in catalysis.

Belongs to the PAPS reductase family. CysH subfamily. [4Fe-4S] cluster serves as cofactor.

It is found in the cytoplasm. The enzyme catalyses [thioredoxin]-disulfide + sulfite + AMP + 2 H(+) = adenosine 5'-phosphosulfate + [thioredoxin]-dithiol. It functions in the pathway sulfur metabolism; hydrogen sulfide biosynthesis; sulfite from sulfate. In terms of biological role, catalyzes the formation of sulfite from adenosine 5'-phosphosulfate (APS) using thioredoxin as an electron donor. The protein is Adenosine 5'-phosphosulfate reductase of Halalkalibacterium halodurans (strain ATCC BAA-125 / DSM 18197 / FERM 7344 / JCM 9153 / C-125) (Bacillus halodurans).